A 247-amino-acid chain; its full sequence is ATP synthase subunit a, chloroplastic (247 aa).

5 helical membrane-spanning segments follow: residues 38–58 (QVLITSWVVIAILLISTILVV), 95–115 (VPFIGTLFLFIFVSNWSGALL), 134–154 (INTTVALALLTSVAYFYAGIS), 199–219 (LVVVVLVSLVPLVVPIPVMFL), and 220–240 (GLFTSGIQALIFATLAAAYIG).

The protein belongs to the ATPase A chain family. F-type ATPases have 2 components, CF(1) - the catalytic core - and CF(0) - the membrane proton channel. CF(1) has five subunits: alpha(3), beta(3), gamma(1), delta(1), epsilon(1). CF(0) has four main subunits: a, b, b' and c.

Its subcellular location is the plastid. The protein localises to the chloroplast thylakoid membrane. In terms of biological role, key component of the proton channel; it plays a direct role in the translocation of protons across the membrane. The sequence is that of ATP synthase subunit a, chloroplastic from Pisum sativum (Garden pea).